The primary structure comprises 332 residues: MKQVQTKRDWKKLAYDVVEEKVITKEDAIAILEADDTEILEIMNAAYIIRHHHFGKKVKLNMIINTKSGLCPEDCGYCSQSIISEAPIDKYAWLTQEKIVEGAHEAIRRKAGTYCIVASGRRPTDKEVNHVIGAVKEIRETTDLKICCCLGFLNEDQAGRLAEAGVHRYNHNLNTHANNYESICSTHTYDDRVDTVQKAKQAGISPCSGAIFGMGETIEERAEIAFELQRIDADSIPCNFLVAVKGTPLEGQKELTPVECLKVLAMMRFVNPTKEIRISGGREINLRSVQPIGLFAANSIFVGDYLTTAGQEPTADWGMIEDLGFEIEECAL.

The 230-residue stretch at 53–282 (HFGKKVKLNM…TKEIRISGGR (230 aa)) folds into the Radical SAM core domain. Residues C71, C75, and C78 each coordinate [4Fe-4S] cluster. 4 residues coordinate [2Fe-2S] cluster: C115, C147, C207, and R277.

It belongs to the radical SAM superfamily. Biotin synthase family. As to quaternary structure, homodimer. [4Fe-4S] cluster serves as cofactor. Requires [2Fe-2S] cluster as cofactor.

It carries out the reaction (4R,5S)-dethiobiotin + (sulfur carrier)-SH + 2 reduced [2Fe-2S]-[ferredoxin] + 2 S-adenosyl-L-methionine = (sulfur carrier)-H + biotin + 2 5'-deoxyadenosine + 2 L-methionine + 2 oxidized [2Fe-2S]-[ferredoxin]. It participates in cofactor biosynthesis; biotin biosynthesis; biotin from 7,8-diaminononanoate: step 2/2. Catalyzes the conversion of dethiobiotin (DTB) to biotin by the insertion of a sulfur atom into dethiobiotin via a radical-based mechanism. This Bacillus cereus (strain AH187) protein is Biotin synthase.